The primary structure comprises 566 residues: Urease subunit alpha (566 aa).

The Urease domain maps to G129–F566. Ni(2+)-binding residues include H134, H136, and K217. K217 is subject to N6-carboxylysine. Residue H219 coordinates substrate. Residues H246 and H272 each contribute to the Ni(2+) site. H320 acts as the Proton donor in catalysis. A Ni(2+)-binding site is contributed by D360.

It belongs to the metallo-dependent hydrolases superfamily. Urease alpha subunit family. In terms of assembly, heterotrimer of UreA (gamma), UreB (beta) and UreC (alpha) subunits. Three heterotrimers associate to form the active enzyme. Ni cation is required as a cofactor. Post-translationally, carboxylation allows a single lysine to coordinate two nickel ions.

Its subcellular location is the cytoplasm. The enzyme catalyses urea + 2 H2O + H(+) = hydrogencarbonate + 2 NH4(+). It functions in the pathway nitrogen metabolism; urea degradation; CO(2) and NH(3) from urea (urease route): step 1/1. The sequence is that of Urease subunit alpha from Janthinobacterium sp. (strain Marseille) (Minibacterium massiliensis).